The sequence spans 666 residues: Kinesin-like protein Nod (666 aa).

Residues 8–320 form the Kinesin motor domain; it reads AVRIAVREAP…LRFGTSAKKL (313 aa). 87–94 provides a ligand contact to ATP; that stretch reads GQTGTGKS. The segment at 423–450 is disordered; it reads GFHSDSDKDRHLMPPPTGQEPRQASSQN. Residues 639–666 adopt a coiled-coil conformation; that stretch reads ENLFQVKSLPIWSGNKWERFCQINCLDT.

Belongs to the TRAFAC class myosin-kinesin ATPase superfamily. Kinesin family. In terms of tissue distribution, in adult female, found in meiotically active ovaries.

It localises to the cytoplasm. The protein localises to the cytoskeleton. Its function is as follows. Required for the distributive chromosome segregation of non-exchange chromosomes during meiosis. May be a microtubule motor required to hold distributively 'paired' chromosomes at the metaphase plate until anaphase. In Drosophila melanogaster (Fruit fly), this protein is Kinesin-like protein Nod (nod).